We begin with the raw amino-acid sequence, 96 residues long: Citrate lyase acyl carrier protein (96 aa).

At S14 the chain carries O-(phosphoribosyl dephospho-coenzyme A)serine.

This sequence belongs to the CitD family. Oligomer with a subunit composition of (alpha,beta,gamma)6.

The protein resides in the cytoplasm. In terms of biological role, covalent carrier of the coenzyme of citrate lyase. The chain is Citrate lyase acyl carrier protein from Pectobacterium atrosepticum (strain SCRI 1043 / ATCC BAA-672) (Erwinia carotovora subsp. atroseptica).